The following is a 330-amino-acid chain: tRNA-modifying protein YgfZ (330 aa).

Folate contacts are provided by tryptophan 28 and tryptophan 190.

Belongs to the tRNA-modifying YgfZ family.

It is found in the cytoplasm. Functionally, folate-binding protein involved in regulating the level of ATP-DnaA and in the modification of some tRNAs. It is probably a key factor in regulatory networks that act via tRNA modification, such as initiation of chromosomal replication. The polypeptide is tRNA-modifying protein YgfZ (Yersinia enterocolitica serotype O:8 / biotype 1B (strain NCTC 13174 / 8081)).